The following is a 447-amino-acid chain: ATP-dependent protease ATPase subunit HslU (447 aa).

ATP is bound by residues Ile18, 60 to 65 (GVGKTE), Asp260, Glu325, and Arg397.

Belongs to the ClpX chaperone family. HslU subfamily. As to quaternary structure, a double ring-shaped homohexamer of HslV is capped on each side by a ring-shaped HslU homohexamer. The assembly of the HslU/HslV complex is dependent on binding of ATP.

It localises to the cytoplasm. ATPase subunit of a proteasome-like degradation complex; this subunit has chaperone activity. The binding of ATP and its subsequent hydrolysis by HslU are essential for unfolding of protein substrates subsequently hydrolyzed by HslV. HslU recognizes the N-terminal part of its protein substrates and unfolds these before they are guided to HslV for hydrolysis. The protein is ATP-dependent protease ATPase subunit HslU of Paraburkholderia phymatum (strain DSM 17167 / CIP 108236 / LMG 21445 / STM815) (Burkholderia phymatum).